A 97-amino-acid chain; its full sequence is Large ribosomal subunit protein bL28 (97 aa).

Belongs to the bacterial ribosomal protein bL28 family.

In Rickettsia akari (strain Hartford), this protein is Large ribosomal subunit protein bL28.